Here is a 227-residue protein sequence, read N- to C-terminus: Riboflavin kinase (227 aa).

The segment at 1 to 92 is H-T-H motif-like; sequence MSKDYEVFPL…LKRTIDSSTF (92 aa). Residues 93 to 227 form a riboflavin kinase region; that stretch reads LTLRGYVVPG…GDKVEVVIPV (135 aa). A CDP-binding site is contributed by 102–107; it reads GLGEGA. Mg(2+) is bound by residues Thr-131 and Asn-133. FMN is bound by residues Thr-194 and Glu-202. 207 to 210 contributes to the CDP binding site; that stretch reads VRLR.

Belongs to the archaeal riboflavin kinase family. It depends on Mg(2+) as a cofactor.

The catalysed reaction is riboflavin + CTP = CDP + FMN + H(+). It functions in the pathway cofactor biosynthesis; FMN biosynthesis; FMN from riboflavin (CTP route): step 1/1. Its function is as follows. Catalyzes the CTP-dependent phosphorylation of riboflavin (vitamin B2) to form flavin mononucleotide (FMN). In Thermofilum pendens (strain DSM 2475 / Hrk 5), this protein is Riboflavin kinase (ribK).